Here is a 799-residue protein sequence, read N- to C-terminus: Potassium transporter 21 (799 aa).

The Cytoplasmic portion of the chain corresponds to 1 to 56; the sequence is MDPGVEKKKQQMELVDVESGGLPVERQDSLFREAVRAEHAGAAHWDEQDSWGRTMS. Residues 57–77 form a helical membrane-spanning segment; that stretch reads LAFQCVGILYGDIGTSSLYVY. Residues 78-93 are Extracellular-facing; the sequence is SSTFEHGIGHPDDVVG. A helical transmembrane segment spans residues 94–114; the sequence is VLSLIVYSFMLFTVIKIVFVA. The Cytoplasmic portion of the chain corresponds to 115–181; it reads LHANDHGDGG…QLLEASKAAK (67 aa). Residues 182 to 202 traverse the membrane as a helical segment; the sequence is ISLFLLTILAIAMVISDAVLT. Residues 203-219 are Extracellular-facing; the sequence is PPISVLSAVGGLREKVP. A helical membrane pass occupies residues 220 to 240; it reads HLTTDQIVWITVAILVVLFAI. Residues 241–251 are Cytoplasmic-facing; it reads QRYGTDKVGYS. A helical transmembrane segment spans residues 252-272; that stretch reads FAPIILLWLLLIGATGLYNLI. At 273 to 301 the chain is on the extracellular side; that stretch reads KHDISVLRAFNPKYIIDYFRRNKKEGWVS. A helical transmembrane segment spans residues 302–322; the sequence is LGSILLCFTGSEALFANLGYF. Over 323–328 the chain is Cytoplasmic; sequence SIRSIQ. A helical transmembrane segment spans residues 329-349; it reads LSFSFALLPSVLLTYIGQAAF. Residues 350-362 lie on the Extracellular side of the membrane; that stretch reads LSKNPKNVANTFF. A helical transmembrane segment spans residues 363–383; it reads AATPISLFWPTFIMAIAASII. The Cytoplasmic segment spans residues 384–420; the sequence is GSQAMISCAFATVSHLQSLSCFPRVKILHTSKRFPGQ. The chain crosses the membrane as a helical span at residues 421–441; sequence LYIPGVNFLLCVAACVVTVSF. At 442 to 452 the chain is on the extracellular side; the sequence is KTTVIIGKAHE. A helical transmembrane segment spans residues 453–473; that stretch reads ICVILVMIITTLLMTIVMLLV. At 474–475 the chain is on the cytoplasmic side; sequence WK. The helical transmembrane segment at 476-496 threads the bilayer; that stretch reads INILWVALFFITFTSTEAVYL. The Extracellular portion of the chain corresponds to 497 to 508; sequence SSVLYKFTHGPY. Residues 509–529 form a helical membrane-spanning segment; sequence VPVAMSVVLMVVMIVWHYVHV. Residues 530-799 lie on the Cytoplasmic side of the membrane; the sequence is KRYKYELEHT…LLKVGISYEI (270 aa).

This sequence belongs to the HAK/KUP transporter (TC 2.A.72.3) family.

It is found in the membrane. Functionally, high-affinity potassium transporter. The chain is Potassium transporter 21 (HAK21) from Oryza sativa subsp. japonica (Rice).